Here is a 336-residue protein sequence, read N- to C-terminus: Serpentine receptor class beta-15 (336 aa).

The next 7 membrane-spanning stretches (helical) occupy residues 24 to 44 (LFIH…FVIF), 57 to 77 (FLFS…AIIS), 109 to 129 (IFMS…FIAM), 142 to 162 (LGPI…FFIY), 186 to 206 (FTFF…NSYL), 237 to 257 (VFVV…IMIL), and 276 to 296 (GAFT…AVYL).

This sequence belongs to the nematode receptor-like protein srb family.

It localises to the membrane. This is Serpentine receptor class beta-15 (srb-15) from Caenorhabditis elegans.